Here is a 34-residue protein sequence, read N- to C-terminus: Photosystem II reaction center protein Psb30 (34 aa).

Residues 6–26 form a helical membrane-spanning segment; the sequence is VIGQLIATGAIMLAGPAVIVL.

This sequence belongs to the Psb30/Ycf12 family. As to quaternary structure, PSII is composed of 1 copy each of membrane proteins PsbA, PsbB, PsbC, PsbD, PsbE, PsbF, PsbH, PsbI, PsbJ, PsbK, PsbL, PsbM, PsbT, PsbX, PsbY, PsbZ, Psb30/Ycf12, peripheral proteins of the oxygen-evolving complex and a large number of cofactors. It forms dimeric complexes.

The protein resides in the plastid. Its subcellular location is the chloroplast thylakoid membrane. Its function is as follows. A core subunit of photosystem II (PSII), probably helps stabilize the reaction center. The chain is Photosystem II reaction center protein Psb30 from Trieres chinensis (Marine centric diatom).